The following is a 481-amino-acid chain: Ribosomal protein uS12 methylthiotransferase RimO (481 aa).

In terms of domain architecture, MTTase N-terminal spans 38-148 (NRIGFVSLGC…VLKHVHKYVP (111 aa)). C47, C83, C112, C180, C184, and C187 together coordinate [4Fe-4S] cluster. The region spanning 166 to 403 (LTPKHYAYLK…MEVQAEISAE (238 aa)) is the Radical SAM core domain. The region spanning 406-472 (ARFVGRTMDI…EHDLWAELVD (67 aa)) is the TRAM domain.

The protein belongs to the methylthiotransferase family. RimO subfamily. [4Fe-4S] cluster is required as a cofactor.

It localises to the cytoplasm. It carries out the reaction L-aspartate(89)-[ribosomal protein uS12]-hydrogen + (sulfur carrier)-SH + AH2 + 2 S-adenosyl-L-methionine = 3-methylsulfanyl-L-aspartate(89)-[ribosomal protein uS12]-hydrogen + (sulfur carrier)-H + 5'-deoxyadenosine + L-methionine + A + S-adenosyl-L-homocysteine + 2 H(+). Its function is as follows. Catalyzes the methylthiolation of an aspartic acid residue of ribosomal protein uS12. This chain is Ribosomal protein uS12 methylthiotransferase RimO, found in Shewanella oneidensis (strain ATCC 700550 / JCM 31522 / CIP 106686 / LMG 19005 / NCIMB 14063 / MR-1).